Reading from the N-terminus, the 410-residue chain is Arginine deiminase (410 aa).

Cysteine 400 (amidino-cysteine intermediate) is an active-site residue.

Belongs to the arginine deiminase family.

It localises to the cytoplasm. The enzyme catalyses L-arginine + H2O = L-citrulline + NH4(+). It functions in the pathway amino-acid degradation; L-arginine degradation via ADI pathway; carbamoyl phosphate from L-arginine: step 1/2. This Bacillus thuringiensis subsp. konkukian (strain 97-27) protein is Arginine deiminase.